Here is a 136-residue protein sequence, read N- to C-terminus: Pterin-4-alpha-carbinolamine dehydratase 2 (136 aa).

N6-acetyllysine; alternate is present on residues K120, K124, and K131. N6-succinyllysine; alternate is present on residues K120, K124, and K131.

It belongs to the pterin-4-alpha-carbinolamine dehydratase family. Homotetramer. Interacts with DYRK1B.

The catalysed reaction is (4aS,6R)-4a-hydroxy-L-erythro-5,6,7,8-tetrahydrobiopterin = (6R)-L-erythro-6,7-dihydrobiopterin + H2O. In terms of biological role, involved in tetrahydrobiopterin biosynthesis. Seems to both prevent the formation of 7-pterins and accelerate the formation of quinonoid-BH2. Its function is as follows. Regulates the dimerization of homeodomain protein HNF-1-alpha and enhances its transcriptional activity. This is Pterin-4-alpha-carbinolamine dehydratase 2 (Pcbd2) from Mus musculus (Mouse).